We begin with the raw amino-acid sequence, 566 residues long: E3 ubiquitin-protein ligase RNF220 (566 aa).

A Glycyl lysine isopeptide (Lys-Gly) (interchain with G-Cter in SUMO2) cross-link involves residue lysine 277. The tract at residues 277 to 297 (KREGESPTASPHSSATDDLHH) is disordered. The residue at position 390 (serine 390) is a Phosphoserine. Residues 485 to 513 (EDSAVTTFEALKARVRELERQLSRGDRYK) are a coiled coil. The tract at residues 514–522 (CLICMDSYS) is required for targeting to the cytoplasm. The segment at 514–553 (CLICMDSYSMPLTSIQCWHVHCEECWLRTLGAKKLCPQCY) adopts an RING-type zinc-finger fold.

As to quaternary structure, interacts with SIN3B. Interacts with CTNNB1 (via Armadillo repeats 2-8). Interacts with USP7 (via MATH domain). In terms of processing, auto-ubiquitinated; leads to proteasomal degradation.

The protein localises to the cytoplasm. It carries out the reaction S-ubiquitinyl-[E2 ubiquitin-conjugating enzyme]-L-cysteine + [acceptor protein]-L-lysine = [E2 ubiquitin-conjugating enzyme]-L-cysteine + N(6)-ubiquitinyl-[acceptor protein]-L-lysine.. The protein operates within protein modification; protein ubiquitination. E3 ubiquitin-protein ligase that promotes the ubiquitination and proteasomal degradation of SIN3B. Independently of its E3 ligase activity, acts as a CTNNB1 stabilizer through USP7-mediated deubiquitination of CTNNB1 promoting Wnt signaling. In Bos taurus (Bovine), this protein is E3 ubiquitin-protein ligase RNF220 (RNF220).